The sequence spans 360 residues: Phospho-N-acetylmuramoyl-pentapeptide-transferase (360 aa).

Helical transmembrane passes span 21-41 (YLSF…LWMG), 73-93 (TMGG…WADL), 94-114 (TNPY…VGFV), 132-152 (WKYF…YAHG), 168-188 (VMPQ…VGTS), 199-219 (GLAI…AWAT), 239-259 (LVVV…FNTY), 263-283 (VFMG…IAVL), 288-308 (FVLV…ILQV), and 338-358 (VIVR…ATLK).

It belongs to the glycosyltransferase 4 family. MraY subfamily. Mg(2+) serves as cofactor.

It localises to the cell inner membrane. It catalyses the reaction UDP-N-acetyl-alpha-D-muramoyl-L-alanyl-gamma-D-glutamyl-meso-2,6-diaminopimeloyl-D-alanyl-D-alanine + di-trans,octa-cis-undecaprenyl phosphate = di-trans,octa-cis-undecaprenyl diphospho-N-acetyl-alpha-D-muramoyl-L-alanyl-D-glutamyl-meso-2,6-diaminopimeloyl-D-alanyl-D-alanine + UMP. It functions in the pathway cell wall biogenesis; peptidoglycan biosynthesis. Catalyzes the initial step of the lipid cycle reactions in the biosynthesis of the cell wall peptidoglycan: transfers peptidoglycan precursor phospho-MurNAc-pentapeptide from UDP-MurNAc-pentapeptide onto the lipid carrier undecaprenyl phosphate, yielding undecaprenyl-pyrophosphoryl-MurNAc-pentapeptide, known as lipid I. This Vibrio cholerae serotype O1 (strain M66-2) protein is Phospho-N-acetylmuramoyl-pentapeptide-transferase.